Reading from the N-terminus, the 300-residue chain is Ribosomal RNA small subunit methyltransferase H (300 aa).

S-adenosyl-L-methionine-binding positions include 46 to 48, D65, F92, D107, and Q114; that span reads GGH.

It belongs to the methyltransferase superfamily. RsmH family.

It is found in the cytoplasm. The catalysed reaction is cytidine(1402) in 16S rRNA + S-adenosyl-L-methionine = N(4)-methylcytidine(1402) in 16S rRNA + S-adenosyl-L-homocysteine + H(+). In terms of biological role, specifically methylates the N4 position of cytidine in position 1402 (C1402) of 16S rRNA. This Prochlorococcus marinus (strain AS9601) protein is Ribosomal RNA small subunit methyltransferase H.